Consider the following 292-residue polypeptide: uncharacterized protein (292 aa).

Residues leucine 13–tyrosine 35 form a helical membrane-spanning segment.

Belongs to the serine esterase family.

It is found in the membrane. This is an uncharacterized protein from Salmonella typhi.